We begin with the raw amino-acid sequence, 348 residues long: Ion-translocating oxidoreductase complex subunit D (348 aa).

Transmembrane regions (helical) follow at residues 15-35 (LTAK…GMQA), 36-56 (YFFG…AVAI), 67-87 (PTAF…LAIS), 88-108 (IPPY…LLLA), and 125-145 (VAYA…LVPI). T186 is modified (FMN phosphoryl threonine). 5 helical membrane-spanning segments follow: residues 212-232 (LFAN…LLLI), 241-261 (IPAA…LLLP), 265-285 (LNVV…FIAT), 298-318 (LIFG…GNYP), and 320-340 (AVAF…HYTQ).

It belongs to the NqrB/RnfD family. The complex is composed of six subunits: RnfA, RnfB, RnfC, RnfD, RnfE and RnfG. Requires FMN as cofactor.

The protein resides in the cell inner membrane. Functionally, part of a membrane-bound complex that couples electron transfer with translocation of ions across the membrane. The polypeptide is Ion-translocating oxidoreductase complex subunit D (Actinobacillus pleuropneumoniae serotype 5b (strain L20)).